We begin with the raw amino-acid sequence, 287 residues long: MIIKVPASTANLGPGFDSIGMAVSLYLEVEVLSVSDRFQVDHVIPKIPHDETNLIVKTALTVYPGLQPLHLRVKNDIPLAHGLGSSSSAIAAGIELADHFGKLGLSDEEKVQIGARIEGHPDNIAPTILGGLVVGTEVDQHFDAIKAPLPPYTLVAYVPDYNLATKDARKVLPKELDFKTATHGSAIANTLVASLFTQNYKMAGELMESDVFHEPYREKLVPELNQIREVAHQKHAVATYLSGAGSTVMTWIEDEHVRGFLSGLNKHGLKANTFILHPDKNGVQIIE.

ATP is bound at residue 78–88; that stretch reads PLAHGLGSSSS.

The protein belongs to the GHMP kinase family. Homoserine kinase subfamily.

The protein localises to the cytoplasm. The catalysed reaction is L-homoserine + ATP = O-phospho-L-homoserine + ADP + H(+). The protein operates within amino-acid biosynthesis; L-threonine biosynthesis; L-threonine from L-aspartate: step 4/5. Its function is as follows. Catalyzes the ATP-dependent phosphorylation of L-homoserine to L-homoserine phosphate. The sequence is that of Homoserine kinase from Lactobacillus acidophilus (strain ATCC 700396 / NCK56 / N2 / NCFM).